A 217-amino-acid chain; its full sequence is Probable GTP-binding protein EngB (217 aa).

In terms of domain architecture, EngB-type G spans 33–217; that stretch reads GPAEIAFAGR…RITIEQAVAR (185 aa). GTP contacts are provided by residues 41–48, 68–72, 95–98, 162–165, and 196–198; these read GRSNVGKS, GRTQE, DMPG, TKTD, and TSS. The Mg(2+) site is built by Ser48 and Thr70.

This sequence belongs to the TRAFAC class TrmE-Era-EngA-EngB-Septin-like GTPase superfamily. EngB GTPase family. It depends on Mg(2+) as a cofactor.

In terms of biological role, necessary for normal cell division and for the maintenance of normal septation. The protein is Probable GTP-binding protein EngB of Sinorhizobium fredii (strain NBRC 101917 / NGR234).